The sequence spans 405 residues: Cytoplasmic tRNA 2-thiolation protein 2 (405 aa).

It belongs to the CTU2/NCS2 family.

Its subcellular location is the cytoplasm. It participates in tRNA modification; 5-methoxycarbonylmethyl-2-thiouridine-tRNA biosynthesis. Its function is as follows. Plays a central role in 2-thiolation of mcm(5)S(2)U at tRNA wobble positions of tRNA(Lys), tRNA(Glu) and tRNA(Gln). May act by forming a heterodimer with NCS6/CTU1 that ligates sulfur from thiocarboxylated URM1 onto the uridine of tRNAs at wobble position. The chain is Cytoplasmic tRNA 2-thiolation protein 2 from Drosophila persimilis (Fruit fly).